The sequence spans 118 residues: MARIAGINVPDNKHAVIALTAIYGVGRTRSQQILAATGIAEDTKIGSLSEDKLDALRDAVSKFAVEGDLRREVSMNIKRLMDLGCFRGLRHRRSLPLRGQRTKTNARTRKGPRKPIKK.

Positions 94-118 (SLPLRGQRTKTNARTRKGPRKPIKK) are disordered.

Belongs to the universal ribosomal protein uS13 family. In terms of assembly, part of the 30S ribosomal subunit. Forms a loose heterodimer with protein S19. Forms two bridges to the 50S subunit in the 70S ribosome.

Located at the top of the head of the 30S subunit, it contacts several helices of the 16S rRNA. In the 70S ribosome it contacts the 23S rRNA (bridge B1a) and protein L5 of the 50S subunit (bridge B1b), connecting the 2 subunits; these bridges are implicated in subunit movement. Contacts the tRNAs in the A and P-sites. The polypeptide is Small ribosomal subunit protein uS13 (Idiomarina loihiensis (strain ATCC BAA-735 / DSM 15497 / L2-TR)).